Consider the following 1382-residue polypeptide: DNA-directed RNA polymerase subunit beta'' (1382 aa).

Zn(2+) contacts are provided by cysteine 224, cysteine 294, cysteine 301, and cysteine 304.

The protein belongs to the RNA polymerase beta' chain family. RpoC2 subfamily. As to quaternary structure, in plastids the minimal PEP RNA polymerase catalytic core is composed of four subunits: alpha, beta, beta', and beta''. When a (nuclear-encoded) sigma factor is associated with the core the holoenzyme is formed, which can initiate transcription. Zn(2+) serves as cofactor.

The protein resides in the plastid. It localises to the chloroplast. It carries out the reaction RNA(n) + a ribonucleoside 5'-triphosphate = RNA(n+1) + diphosphate. In terms of biological role, DNA-dependent RNA polymerase catalyzes the transcription of DNA into RNA using the four ribonucleoside triphosphates as substrates. The polypeptide is DNA-directed RNA polymerase subunit beta'' (Liriodendron tulipifera (Tuliptree)).